We begin with the raw amino-acid sequence, 675 residues long: Putative L-type lectin-domain containing receptor kinase I.11 (675 aa).

The first 22 residues, 1 to 22 (MASERLHLILLVFFNHLTFLLS), serve as a signal peptide directing secretion. The Extracellular portion of the chain corresponds to 23–292 (QQEEAGFIYN…PKAKQEQTSP (270 aa)). The tract at residues 27-263 (AGFIYNGFGQ…YQYILGWSFS (237 aa)) is legume-lectin like. N60, N129, N186, N209, and N230 each carry an N-linked (GlcNAc...) asparagine glycan. Residues 293-313 (LLIVLLMLLVLIMLAVLGGIY) form a helical membrane-spanning segment. Residues 314–675 (LYRRKKYAEV…THTITYGDGR (362 aa)) lie on the Cytoplasmic side of the membrane. Residues 348–620 (FDKDGRLGKG…QVIQYINQNL (273 aa)) enclose the Protein kinase domain. Residues 354-362 (LGKGGFGEV) and K376 each bind ATP. D472 serves as the catalytic Proton acceptor.

In the C-terminal section; belongs to the protein kinase superfamily. Ser/Thr protein kinase family. The protein in the N-terminal section; belongs to the leguminous lectin family.

It is found in the cell membrane. The enzyme catalyses L-seryl-[protein] + ATP = O-phospho-L-seryl-[protein] + ADP + H(+). It catalyses the reaction L-threonyl-[protein] + ATP = O-phospho-L-threonyl-[protein] + ADP + H(+). This is Putative L-type lectin-domain containing receptor kinase I.11 (LECRK111) from Arabidopsis thaliana (Mouse-ear cress).